A 389-amino-acid chain; its full sequence is MDGGVGEEGKQQPHLVLAHKLFLLSHPDVDDLAKVDLRADVLAAVKSDDMASLYESLGAGGVLETDAALLAEMRGRIEEEIRKLDEKIADAEENLGESEVREAHLAKSLYFIRVGEKEKALEQLKVTEGKTVAVGQKMDLVFHTLQIGFFYMDFDLISKSIDKAKKLFEEGGDWERKNRLKVYEGLYCMATRNFKKAASLFLDSISTFTTYELFPYDTFIFYTVLTSVISLDRVSLKAKVVDAPEILAVIGKVPHLSEFLNSLYNCQYKSFFAAFSGLTEQIKLDRYLQPHFRYYMREVRTVVYSQFLESYKSVTMEAMASAFGVTVDFIDLELSRFIAAGKLHCKIDKVACVLETNRPDARNAFYQATIKQGDFLLNRIQKLSRVIDL.

Positions 193 to 361 constitute a PCI domain; that stretch reads NFKKAASLFL…CVLETNRPDA (169 aa).

Belongs to the proteasome subunit S10 family.

Its function is as follows. Acts as a regulatory subunit of the 26S proteasome which is involved in the ATP-dependent degradation of ubiquitinated proteins. The sequence is that of 26S proteasome non-ATPase regulatory subunit 6 (RPN7) from Oryza sativa subsp. japonica (Rice).